Consider the following 397-residue polypeptide: Flavohemoprotein (397 aa).

Positions 4–140 (SFSPHTITLI…IANLLKDREA (137 aa)) constitute a Globin domain. Histidine 87 is a binding site for heme b. Catalysis depends on charge relay system residues tyrosine 97 and glutamate 139. The interval 151–397 (GGWIHWRRFV…FGPMDEEMAA (247 aa)) is reductase. Residues 154–258 (IHWRRFVISK…TPPVGDFFLP (105 aa)) enclose the FAD-binding FR-type domain. Residues tyrosine 192 and 207-210 (RNYS) each bind FAD. NADP(+) is bound at residue 271–276 (GVGLTP). Residue 387–390 (FFGP) participates in FAD binding.

The protein belongs to the globin family. Two-domain flavohemoproteins subfamily. In the C-terminal section; belongs to the flavoprotein pyridine nucleotide cytochrome reductase family. It depends on heme b as a cofactor. Requires FAD as cofactor.

The enzyme catalyses 2 nitric oxide + NADPH + 2 O2 = 2 nitrate + NADP(+) + H(+). It carries out the reaction 2 nitric oxide + NADH + 2 O2 = 2 nitrate + NAD(+) + H(+). Is involved in NO detoxification in an aerobic process, termed nitric oxide dioxygenase (NOD) reaction that utilizes O(2) and NAD(P)H to convert NO to nitrate, which protects the bacterium from various noxious nitrogen compounds. Therefore, plays a central role in the inducible response to nitrosative stress. This chain is Flavohemoprotein, found in Xylella fastidiosa (strain 9a5c).